A 511-amino-acid chain; its full sequence is Aldehyde dehydrogenase X, mitochondrial (511 aa).

The N-terminal 11 residues, 1–11 (PRLFALHHSAT), are a transit peptide targeting the mitochondrion. K45 carries the N6-acetyllysine modification. N6-acetyllysine; alternate is present on K46. K46 carries the post-translational modification N6-succinyllysine; alternate. An N6-succinyllysine modification is found at K75. Position 256–261 (256–261 (GSTKVG)) interacts with NAD(+). E279 serves as the catalytic Proton acceptor. C313 (nucleophile) is an active-site residue. N6-acetyllysine; alternate is present on residues K377, K393, and K420. 3 positions are modified to N6-succinyllysine; alternate: K377, K393, and K420. An N6-acetyllysine modification is found at K423.

The protein belongs to the aldehyde dehydrogenase family. In terms of assembly, homotetramer.

The protein localises to the mitochondrion matrix. It catalyses the reaction an aldehyde + NAD(+) + H2O = a carboxylate + NADH + 2 H(+). The protein operates within alcohol metabolism; ethanol degradation; acetate from ethanol: step 2/2. In terms of biological role, ALDHs play a major role in the detoxification of alcohol-derived acetaldehyde. They are involved in the metabolism of corticosteroids, biogenic amines, neurotransmitters, and lipid peroxidation. In the cornea, this enzyme may help in the absorption of the damaging UV-B, as well as in the detoxification of the UV-induced peroxidic aldehydes. This Bos taurus (Bovine) protein is Aldehyde dehydrogenase X, mitochondrial (ALDH1B1).